A 499-amino-acid polypeptide reads, in one-letter code: Neuronal acetylcholine receptor subunit alpha-3 (499 aa).

A signal peptide spans 1 to 25 (MGVVLPPPPLSMLMLVLMLLPVASA). Topologically, residues 26 to 244 (SEAEHRLFQY…PLFYTINLII (219 aa)) are extracellular. N-linked (GlcNAc...) asparagine glycosylation is found at asparagine 49 and asparagine 166. Intrachain disulfides connect cysteine 153–cysteine 167 and cysteine 217–cysteine 218. The helical transmembrane segment at 245 to 260 (PCLLISFLTVLVFYLP) threads the bilayer. Residues 261 to 262 (SD) lie on the Cytoplasmic side of the membrane. Residues 263 to 279 (CGEKVTLCISVLLSLTV) form a helical membrane-spanning segment. Na(+) is bound at residue glutamate 265. Over 280–301 (FLLVITETIPSTSLVIPLIGEY) the chain is Extracellular. The chain crosses the membrane as a helical span at residues 302-320 (LLFTMIFVTLSIVITVFVL). Residues 321–468 (NVHYRTPTTH…QDDWKYVAMV (148 aa)) are Cytoplasmic-facing. 2 positions are modified to phosphoserine: serine 407 and serine 410. The chain crosses the membrane as a helical span at residues 469 to 487 (IDRIFLWVFILVCILGTAG). The Extracellular segment spans residues 488–499 (LFLQPLMARDDT).

It belongs to the ligand-gated ion channel (TC 1.A.9) family. Acetylcholine receptor (TC 1.A.9.1) subfamily. Alpha-3/CHRNA3 sub-subfamily. As to quaternary structure, neuronal AChR is composed of two different types of subunits: alpha and beta. CHRNA3/Alpha-3 subunit can be combined to CHRNB2/beta-2 or CHRNB4/beta-4 to give rise to functional receptors. Part of a complex composed of STUB1/CHIP, VCP/p97, CHRNA3, and UBXN2A that modulates the ubiquitination and endoplasmic reticulum-associated degradation (ERAD) of CHRNA3. Within the complex UBXN2A acts as a scaffold protein required for the interaction of CHRNA3 with VCP/p97, this interaction also inhibits CHRNA3 ubiquitination by STUB1/CHIP and subsequently ERAD. Interacts with UBXN2A (via SEP domain), the interaction is required for the interaction of CHRNA3 in the STUB1:VCP:UBXN2A complex. Interacts with RIC3; which is required for proper folding and assembly. Interacts with LYPD6. Ubiquitinated; by STUB1/CHIP and thereafter degraded by the 26S proteosome complex. In terms of tissue distribution, expressed in the brain (at protein level).

The protein localises to the synaptic cell membrane. The protein resides in the cell membrane. It is found in the endoplasmic reticulum. Its subcellular location is the golgi apparatus. The enzyme catalyses K(+)(in) = K(+)(out). It carries out the reaction Na(+)(in) = Na(+)(out). The catalysed reaction is Ca(2+)(in) = Ca(2+)(out). Its activity is regulated as follows. Activated by a myriad of ligands such as acetylcholine, cytisine, nicotine, choline and epibatidine. The heteropentamer CHRNA3:CHRNB2 activity is blocked by alpha-conotoxins ImI, ImII, PnIA, GID and MII. The heteropentamer CHRNA3:CHRNB4 activity is blocked by the alpha-conotoxin ImI. Component of neuronal acetylcholine receptors (nAChRs) that function as pentameric, ligand-gated cation channels with high calcium permeability among other activities. nAChRs are excitatory neurotrasnmitter receptors formed by a collection of nAChR subunits known to mediate synaptic transmission in the nervous system and the neuromuscular junction. Each nAchR subunit confers differential attributes to channel properties, including activation, deactivation and desensitization kinetics, pH sensitivity, cation permeability, and binding to allosteric modulators. CHRNA3 forms heteropentameric neuronal acetylcholine receptors with CHRNA5, CHRNB2 and CHRNB4. CHRNA3:CHRNB4 being predominant in neurons of the autonomic ganglia, it is known as ganglionic nicotinic receptor. CHRNA3:CHRNB4 or CHRNA3:CHRNA5:CHRNB4 play also an important role in the habenulo-interpeduncular tract, modulating the mesolimbic dopamine system and affecting reward circuits and addiction. Hypothalamic CHRNA3:CHRNB4 nAChR activation by nicotine leads to activation of POMC neurons and a decrease in food intake. Also expressed in the urothelium where it modulates reflex bladder activity by increasing intracellular calcium through extracellular influx and basal ATP release. This is Neuronal acetylcholine receptor subunit alpha-3 (Chrna3) from Mus musculus (Mouse).